Consider the following 154-residue polypeptide: Large ribosomal subunit protein uL13 (154 aa).

The protein belongs to the universal ribosomal protein uL13 family. In terms of assembly, part of the 50S ribosomal subunit.

Functionally, this protein is one of the early assembly proteins of the 50S ribosomal subunit, although it is not seen to bind rRNA by itself. It is important during the early stages of 50S assembly. This is Large ribosomal subunit protein uL13 from Borrelia garinii subsp. bavariensis (strain ATCC BAA-2496 / DSM 23469 / PBi) (Borreliella bavariensis).